Reading from the N-terminus, the 481-residue chain is Acyl-CoA ligase cnsG (481 aa).

The PTS2-type peroxisomal targeting signal signature appears at 3 to 11 (SPQLPPSMK). ATP-binding positions include 124–132 (KSGTTGNPK), 263–268 (NGYGMT), aspartate 353, and arginine 368. Residue threonine 268 participates in substrate binding. Residues 376-378 (GGL) and 446-448 (AIF) contribute to the CoA site. Lysine 466 contacts ATP.

Belongs to the ATP-dependent AMP-binding enzyme family.

Its pathway is alkaloid biosynthesis. Acyl-CoA ligase; part of the gene cluster that mediates the biosynthesis of communesins, a prominent class of indole alkaloids with great potential as pharmaceuticals. Communesins are biosynthesized by the coupling of tryptamine and aurantioclavine, two building blocks derived from L-tryptophan. The L-tryptophan decarboxylase cnsB converts L-tryptophan to tryptamine, whereas the tryptophan dimethylallyltransferase cnsF converts L-tryptophan to 4-dimethylallyl tryptophan which is further transformed to aurantioclavine by the aurantioclavine synthase cnsA, probably aided by the catalase cnsD. The cytochrome P450 monooxygenase cnsC catalyzes the heterodimeric coupling between the two different indole moieties, tryptamine and aurantioclavine, to construct vicinal quaternary stereocenters and yield the heptacyclic communesin scaffold. The O-methyltransferase cnsE then methylates the communesin scaffold to produce communesin K, the simplest characterized communesin that contains the heptacyclic core. The dioxygenase cnsJ converts communesin K into communesin I. Acylation to introduce the hexadienyl group at position N16 of communesin I by the acyltransferase cnsK leads to the production of communesin B. The hexadienyl group is produced by the highly reducing polyketide synthase cnsI, before being hydrolytically removed from cnsI by the serine hydrolase cnsH, converted into hexadienyl-CoA by the CoA ligase cnsG, and then transferred to communesin I by cnsK. Surprisingly, cnsK may also be a promiscuous acyltransferase that can tolerate a range of acyl groups, including acetyl-, propionyl-, and butyryl-CoA, which lead to communesins A, G and H respectively. The roles of the alpha-ketoglutarate-dependent dioxygenases cnsM and cnsP have still to be determined. This Penicillium expansum (Blue mold rot fungus) protein is Acyl-CoA ligase cnsG.